The primary structure comprises 342 residues: Putative gluconeogenesis factor (342 aa).

Residues 318 to 342 are disordered; it reads SEPPVAATQEIPIDGGRPRGDDAWR. Phosphothreonine is present on T325. Residues 333–342 show a composition bias toward basic and acidic residues; the sequence is GRPRGDDAWR.

This sequence belongs to the gluconeogenesis factor family. Post-translationally, phosphorylated by PknA and/or PknB.

It localises to the cytoplasm. Required for morphogenesis under gluconeogenic growth conditions. The polypeptide is Putative gluconeogenesis factor (Mycobacterium tuberculosis (strain CDC 1551 / Oshkosh)).